The sequence spans 497 residues: 4,4'-diaponeurosporene oxygenase (497 aa).

7–19 serves as a coordination point for FAD; sequence VIGGGLGGISAAI.

The protein belongs to the carotenoid/retinoid oxidoreductase family. CrtP subfamily. Requires FAD as cofactor.

It catalyses the reaction all-trans-4,4'-diaponeurosporene + 2 AH2 + 2 O2 = 4,4'-diaponeurosporenal + 2 A + 3 H2O. It participates in carotenoid biosynthesis; staphyloxanthin biosynthesis; staphyloxanthin from farnesyl diphosphate: step 3/5. Involved in the biosynthesis of the yellow-orange carotenoid staphyloxanthin, which plays a role in the virulence via its protective function against oxidative stress. Catalyzes the oxidation of the terminal methyl side group of 4,4'-diaponeurosporene to form 4,4'-diaponeurosporen-4-al. This chain is 4,4'-diaponeurosporene oxygenase, found in Staphylococcus aureus (strain bovine RF122 / ET3-1).